The primary structure comprises 295 residues: Regucalcin (295 aa).

Residue E18 coordinates a divalent metal cation. Substrate-binding residues include R100, N102, and D120. A divalent metal cation contacts are provided by N150 and D200. D200 (proton donor/acceptor) is an active-site residue.

Belongs to the SMP-30/CGR1 family. It depends on Zn(2+) as a cofactor. Mn(2+) is required as a cofactor. Requires Ca(2+) as cofactor. Mg(2+) serves as cofactor.

The protein localises to the cytoplasm. The catalysed reaction is D-glucono-1,5-lactone + H2O = D-gluconate + H(+). It functions in the pathway cofactor biosynthesis; L-ascorbate biosynthesis via UDP-alpha-D-glucuronate pathway; L-ascorbate from UDP-alpha-D-glucuronate: step 3/4. Its function is as follows. Gluconolactonase with low activity towards other sugar lactones, including gulonolactone and galactonolactone. Catalyzes a key step in ascorbic acid (vitamin C) biosynthesis. Can also hydrolyze diisopropyl phosphorofluoridate and phenylacetate (in vitro). Calcium-binding protein. Modulates Ca(2+) signaling, and Ca(2+)-dependent cellular processes and enzyme activities. This Danio rerio (Zebrafish) protein is Regucalcin.